The following is a 73-amino-acid chain: METQKLISMVKEALEKYQYPLTAKNIKVVIQKEYNVVLPTGSINSILYSNSELFEKIDKTNTIYPPLWIRKTN.

The protein belongs to the asfivirus I73R family.

The protein localises to the virion. This is an uncharacterized protein from Ornithodoros (relapsing fever ticks).